The following is a 155-amino-acid chain: Large ribosomal subunit protein uL15 (155 aa).

Residues 1 to 13 (MKLNELRDAEGAT) show a composition bias toward basic and acidic residues. Residues 1 to 41 (MKLNELRDAEGATKARKRVGRGIGSGSGKTGGRGVKGQKSR) are disordered. Positions 21–35 (RGIGSGSGKTGGRGV) are enriched in gly residues.

It belongs to the universal ribosomal protein uL15 family. In terms of assembly, part of the 50S ribosomal subunit.

Its function is as follows. Binds to the 23S rRNA. The protein is Large ribosomal subunit protein uL15 of Chelativorans sp. (strain BNC1).